Here is a 135-residue protein sequence, read N- to C-terminus: RxLR effector protein Avr10 (135 aa).

The first 19 residues, 1-19 (MRLSFIIFAISLLAGGSGA), serve as a signal peptide directing secretion. The span at 34–43 (GTNQGASTGK) shows a compositional bias: polar residues. The interval 34-64 (GTNQGASTGKRSLRYDNNAERAGEEDDEERA) is disordered. The RxLR-dEER motif lies at 44–63 (RSLRYDNNAERAGEEDDEER). Residues 46 to 55 (LRYDNNAERA) show a composition bias toward basic and acidic residues.

It belongs to the RxLR effector family.

It localises to the secreted. Its subcellular location is the host nucleus. It is found in the host cytoplasm. Its function is as follows. Secreted effector that acts as an elicitor of hypersensitive response (HR) specifically on plants carrying defense protein R10. Enhances P.infestans colonization of Nicotiana benthamiana leaves. The polypeptide is RxLR effector protein Avr10 (Phytophthora infestans (strain T30-4) (Potato late blight agent)).